Consider the following 522-residue polypeptide: GMP synthase [glutamine-hydrolyzing] (522 aa).

One can recognise a Glutamine amidotransferase type-1 domain in the interval 9-204 (KILILDFGAQ…VVDICGCQTL (196 aa)). The active-site Nucleophile is Cys86. Active-site residues include His178 and Glu180. In terms of domain architecture, GMPS ATP-PPase spans 205 to 397 (WTSANIIEDQ…LGLPHAMVYR (193 aa)). 232–238 (SGGVDSS) contributes to the ATP binding site.

As to quaternary structure, homodimer.

It catalyses the reaction XMP + L-glutamine + ATP + H2O = GMP + L-glutamate + AMP + diphosphate + 2 H(+). Its pathway is purine metabolism; GMP biosynthesis; GMP from XMP (L-Gln route): step 1/1. In terms of biological role, catalyzes the synthesis of GMP from XMP. This Xylella fastidiosa (strain M23) protein is GMP synthase [glutamine-hydrolyzing].